Consider the following 431-residue polypeptide: Histidine--tRNA ligase (431 aa).

The protein belongs to the class-II aminoacyl-tRNA synthetase family. In terms of assembly, homodimer.

The protein resides in the cytoplasm. The enzyme catalyses tRNA(His) + L-histidine + ATP = L-histidyl-tRNA(His) + AMP + diphosphate + H(+). The protein is Histidine--tRNA ligase (hisS) of Leifsonia xyli subsp. xyli (strain CTCB07).